A 346-amino-acid polypeptide reads, in one-letter code: Biotin synthase (346 aa).

In terms of domain architecture, Radical SAM core spans 38–256 (RQVQVSTLLS…IAVARIMMPT (219 aa)). The [4Fe-4S] cluster site is built by C53, C57, and C60. The [2Fe-2S] cluster site is built by C97, C128, C188, and R260.

Belongs to the radical SAM superfamily. Biotin synthase family. As to quaternary structure, homodimer. [4Fe-4S] cluster is required as a cofactor. Requires [2Fe-2S] cluster as cofactor.

The catalysed reaction is (4R,5S)-dethiobiotin + (sulfur carrier)-SH + 2 reduced [2Fe-2S]-[ferredoxin] + 2 S-adenosyl-L-methionine = (sulfur carrier)-H + biotin + 2 5'-deoxyadenosine + 2 L-methionine + 2 oxidized [2Fe-2S]-[ferredoxin]. It participates in cofactor biosynthesis; biotin biosynthesis; biotin from 7,8-diaminononanoate: step 2/2. Its function is as follows. Catalyzes the conversion of dethiobiotin (DTB) to biotin by the insertion of a sulfur atom into dethiobiotin via a radical-based mechanism. This Escherichia fergusonii (strain ATCC 35469 / DSM 13698 / CCUG 18766 / IAM 14443 / JCM 21226 / LMG 7866 / NBRC 102419 / NCTC 12128 / CDC 0568-73) protein is Biotin synthase.